The sequence spans 138 residues: Lutropin subunit beta (138 aa).

Residues 1–17 form the signal peptide; it reads LQGLLLWLLLSVGGVWA. Disulfide bonds link cysteine 26–cysteine 74, cysteine 40–cysteine 89, cysteine 43–cysteine 127, cysteine 51–cysteine 105, cysteine 55–cysteine 107, and cysteine 110–cysteine 117. Asparagine 30 carries N-linked (GlcNAc...) asparagine glycosylation.

Belongs to the glycoprotein hormones subunit beta family. As to quaternary structure, heterodimer of a common alpha chain and a unique beta chain which confers biological specificity to thyrotropin, lutropin, follitropin and gonadotropin.

The protein resides in the secreted. In terms of biological role, promotes spermatogenesis and ovulation by stimulating the testes and ovaries to synthesize steroids. In Canis lupus familiaris (Dog), this protein is Lutropin subunit beta (LHB).